Reading from the N-terminus, the 895-residue chain is Catenin alpha-3 (895 aa).

The stretch at 74 to 107 forms a coiled coil; it reads EMIAKEATVLKEELAAALQEVRKESKALKVSAER. Phosphoserine is present on Ser160. Residues 325–379 are a coiled coil; sequence RERIIAECNAIRQALQDLLTEYMSNTGKTERSNTLNTAIVNMSKKTRDLRRQLRK. Thr361 bears the Phosphothreonine mark. The segment at 635–660 is disordered; the sequence is DVSDLEDDHEVRSHTSIQTEGKTDRA. Phosphoserine occurs at positions 637 and 647. Thr649 is subject to Phosphothreonine.

This sequence belongs to the vinculin/alpha-catenin family. In terms of assembly, interacts with CTNNB1. Interacts with PKP2. In terms of tissue distribution, expressed in heart (at protein level).

The protein resides in the cytoplasm. It is found in the cytoskeleton. It localises to the cell junction. The protein localises to the desmosome. In terms of biological role, may be involved in formation of stretch-resistant cell-cell adhesion complexes. In Mus musculus (Mouse), this protein is Catenin alpha-3.